A 203-amino-acid chain; its full sequence is MAKEIAKSLLDIEAVTLSPNDLYTWSSGIKSPIYCDNRVTLGYPLVRGAIRDGLINLIKEHFPEVEVISGTATAGIPHAAFIAEKLKLPMNYVRSSNKSHGKQNQIEGAKSEGKKVVVIEDLISTGGSSVTAVEALKQAGAEVLGVVAIFTYGLKKADDTFSNIQLPFYTLSDYNELIEVAENEGKISSEDIQTLVEWRDNLA.

5-phospho-alpha-D-ribose 1-diphosphate is bound by residues R94, K98, H100, and 120-128 (EDLISTGGS). Orotate is bound at residue S124.

The protein belongs to the purine/pyrimidine phosphoribosyltransferase family. PyrE subfamily. Homodimer. Requires Mg(2+) as cofactor.

It catalyses the reaction orotidine 5'-phosphate + diphosphate = orotate + 5-phospho-alpha-D-ribose 1-diphosphate. It functions in the pathway pyrimidine metabolism; UMP biosynthesis via de novo pathway; UMP from orotate: step 1/2. Catalyzes the transfer of a ribosyl phosphate group from 5-phosphoribose 1-diphosphate to orotate, leading to the formation of orotidine monophosphate (OMP). This Staphylococcus aureus (strain Mu50 / ATCC 700699) protein is Orotate phosphoribosyltransferase.